Here is a 189-residue protein sequence, read N- to C-terminus: Small ribosomal subunit protein uS5 (189 aa).

In terms of domain architecture, S5 DRBM spans 22 to 85; the sequence is FVDKLVAINR…EAAKRELIFV (64 aa).

Belongs to the universal ribosomal protein uS5 family. Part of the 30S ribosomal subunit. Contacts proteins S4 and S8.

Functionally, with S4 and S12 plays an important role in translational accuracy. In terms of biological role, located at the back of the 30S subunit body where it stabilizes the conformation of the head with respect to the body. The protein is Small ribosomal subunit protein uS5 of Rhizobium etli (strain CIAT 652).